Reading from the N-terminus, the 83-residue chain is ATP synthase subunit c, chloroplastic (83 aa).

The next 2 helical transmembrane spans lie at 4–24 (IISA…AIGP) and 57–77 (LAFM…LLFA).

The protein belongs to the ATPase C chain family. As to quaternary structure, F-type ATPases have 2 components, F(1) - the catalytic core - and F(0) - the membrane proton channel. F(1) has five subunits: alpha(3), beta(3), gamma(1), delta(1), epsilon(1). F(0) has four main subunits: a(1), b(1), b'(1) and c(10-14). The alpha and beta chains form an alternating ring which encloses part of the gamma chain. F(1) is attached to F(0) by a central stalk formed by the gamma and epsilon chains, while a peripheral stalk is formed by the delta, b and b' chains.

The protein localises to the plastid. The protein resides in the chloroplast thylakoid membrane. Functionally, f(1)F(0) ATP synthase produces ATP from ADP in the presence of a proton or sodium gradient. F-type ATPases consist of two structural domains, F(1) containing the extramembraneous catalytic core and F(0) containing the membrane proton channel, linked together by a central stalk and a peripheral stalk. During catalysis, ATP synthesis in the catalytic domain of F(1) is coupled via a rotary mechanism of the central stalk subunits to proton translocation. Key component of the F(0) channel; it plays a direct role in translocation across the membrane. A homomeric c-ring of between 10-14 subunits forms the central stalk rotor element with the F(1) delta and epsilon subunits. The protein is ATP synthase subunit c, chloroplastic of Galdieria sulphuraria (Red alga).